A 124-amino-acid polypeptide reads, in one-letter code: Large ribosomal subunit protein bL12 (124 aa).

It belongs to the bacterial ribosomal protein bL12 family. In terms of assembly, homodimer. Part of the ribosomal stalk of the 50S ribosomal subunit. Forms a multimeric L10(L12)X complex, where L10 forms an elongated spine to which 2 to 4 L12 dimers bind in a sequential fashion. Binds GTP-bound translation factors.

Its function is as follows. Forms part of the ribosomal stalk which helps the ribosome interact with GTP-bound translation factors. Is thus essential for accurate translation. In Campylobacter fetus subsp. fetus (strain 82-40), this protein is Large ribosomal subunit protein bL12.